We begin with the raw amino-acid sequence, 326 residues long: MKITIFGAGAIGGYLAAKLAIAGRTDLSIVARGAHLEAIQANGLRLIEDGEESMAPVRAAAKAEELGAQDYVVLALKAHSLTPALDQIAPLLGDHTSVVTMQNGVPWWYFHGVGGPLEGTRLNAVDPGGAIWQRIGPQRVIGSVVYPAVEVDAPGLIRHVEGKRFSLGEPSGERSERVTLLAEEMVKAGLQAPVRDDIRSEIWVKLWGNLSFNPISALTGSTLAAIVADEGTRALARTMMLEAQAIGESLGVRFPIGVDRRIKGAGDVGEHKTSMLQDLERGRPMEIDALVSAVQELGRLVDKPTPTIDAVLALVRRLAVERGCYS.

NADP(+)-binding positions include 7-12 (GAGAIG) and Asn-103. Asn-103 lines the substrate pocket. Residue Lys-205 is the Proton donor of the active site. Positions 209, 213, and 274 each coordinate substrate. Position 286 (Glu-286) interacts with NADP(+).

The protein belongs to the ketopantoate reductase family.

The protein resides in the cytoplasm. It catalyses the reaction (R)-pantoate + NADP(+) = 2-dehydropantoate + NADPH + H(+). Its pathway is cofactor biosynthesis; (R)-pantothenate biosynthesis; (R)-pantoate from 3-methyl-2-oxobutanoate: step 2/2. In terms of biological role, catalyzes the NADPH-dependent reduction of ketopantoate into pantoic acid. This is 2-dehydropantoate 2-reductase from Mesorhizobium japonicum (strain LMG 29417 / CECT 9101 / MAFF 303099) (Mesorhizobium loti (strain MAFF 303099)).